The following is a 592-amino-acid chain: Bifunctional enzyme BirA/CoaX (592 aa).

A biotin--protein ligase region spans residues 1-329; it reads MTVLKLSHWR…ISLRSDDRPV (329 aa). The region spanning 83-259 is the BPL/LPL catalytic domain; the sequence is QTALKHECAS…ELDAVLLQYA (177 aa). The interval 336-592 is type III pantothenate kinase; the sequence is DSERFLLLDG…AAEGREYEHI (257 aa). 344 to 351 contacts ATP; the sequence is DGGNSRLK. Substrate-binding positions include Tyr426 and 433–436; that span reads GSDR. Asp435 serves as the catalytic Proton acceptor. Residue Thr458 coordinates ATP. Position 508 (Thr508) interacts with substrate.

It in the N-terminal section; belongs to the biotin--protein ligase family. In the C-terminal section; belongs to the type III pantothenate kinase family. NH4(+) is required as a cofactor. Requires K(+) as cofactor.

It localises to the cytoplasm. It catalyses the reaction biotin + L-lysyl-[protein] + ATP = N(6)-biotinyl-L-lysyl-[protein] + AMP + diphosphate + H(+). The enzyme catalyses (R)-pantothenate + ATP = (R)-4'-phosphopantothenate + ADP + H(+). It participates in cofactor biosynthesis; coenzyme A biosynthesis; CoA from (R)-pantothenate: step 1/5. Functionally, activates biotin to form biotinyl-5'-adenylate and transfers the biotin moiety to biotin-accepting proteins. In terms of biological role, catalyzes the phosphorylation of pantothenate (Pan), the first step in CoA biosynthesis. The protein is Bifunctional enzyme BirA/CoaX (birA/coaX) of Neisseria meningitidis serogroup B (strain ATCC BAA-335 / MC58).